The sequence spans 324 residues: Deoxyhypusine hydroxylase (324 aa).

2 HEAT-like PBS-type repeats span residues 60 to 86 and 94 to 119; these read LKHELAYCLGQTGSDAAIPHLTQVLED and RHEAAEALGALGKAESLGVLQKYLHR. The Fe cation site is built by H62, E63, H95, and E96. Residues 143–152 show a composition bias toward basic and acidic residues; the sequence is EERKQEKLRQ. The interval 143 to 171 is disordered; the sequence is EERKQEKLRQSDFASVDPAPPMPEDDEKQ. HEAT-like PBS-type repeat units lie at residues 189 to 219, 227 to 253, and 260 to 287; these read KRYRAMFALRDLASPPDLPTAVPAILALAKG, FRHEIAFVFGQLSHPASIPALTEALSN, and VRHEAAEALGSLGDEEGVEETLLKFLHD. Fe cation is bound by residues H229, E230, H262, and E263.

Belongs to the deoxyhypusine hydroxylase family. Fe(2+) is required as a cofactor.

It localises to the cytoplasm. It is found in the nucleus. It carries out the reaction [eIF5A protein]-deoxyhypusine + AH2 + O2 = [eIF5A protein]-hypusine + A + H2O. It participates in protein modification; eIF5A hypusination. Functionally, catalyzes the hydroxylation of the N(6)-(4-aminobutyl)-L-lysine intermediate to form hypusine, an essential post-translational modification only found in mature eIF-5A factor. In Neurospora crassa (strain ATCC 24698 / 74-OR23-1A / CBS 708.71 / DSM 1257 / FGSC 987), this protein is Deoxyhypusine hydroxylase (lia1).